The chain runs to 241 residues: 1-(5-phosphoribosyl)-5-[(5-phosphoribosylamino)methylideneamino] imidazole-4-carboxamide isomerase (241 aa).

The active-site Proton acceptor is D8. The Proton donor role is filled by D130.

It belongs to the HisA/HisF family.

It localises to the cytoplasm. It carries out the reaction 1-(5-phospho-beta-D-ribosyl)-5-[(5-phospho-beta-D-ribosylamino)methylideneamino]imidazole-4-carboxamide = 5-[(5-phospho-1-deoxy-D-ribulos-1-ylimino)methylamino]-1-(5-phospho-beta-D-ribosyl)imidazole-4-carboxamide. It functions in the pathway amino-acid biosynthesis; L-histidine biosynthesis; L-histidine from 5-phospho-alpha-D-ribose 1-diphosphate: step 4/9. The chain is 1-(5-phosphoribosyl)-5-[(5-phosphoribosylamino)methylideneamino] imidazole-4-carboxamide isomerase from Francisella philomiragia subsp. philomiragia (strain ATCC 25017 / CCUG 19701 / FSC 153 / O#319-036).